Consider the following 490-residue polypeptide: Interferon-induced protein with tetratricopeptide repeats 3 (490 aa).

TPR repeat units lie at residues alanine 51–glutamate 84, leucine 94–phenylalanine 127, serine 136–asparagine 169, phenylalanine 172–asparagine 206, glutamine 207–glutamine 240, threonine 241–asparagine 274, proline 415–aspartate 448, and proline 450–glutamate 481. Serine 203 and serine 237 each carry phosphoserine. The tract at residues serine 467 to asparagine 490 is disordered. A compositionally biased stretch (polar residues) spans alanine 474–asparagine 490. Serine 478 bears the Phosphoserine mark.

It belongs to the IFIT family. Component of an interferon-dependent multiprotein complex, at least composed of IFIT1, IFIT2 and IFIT3. Interacts with IFIT1 and IFIT2. Interacts (via N-terminus) with MAVS, TBK1, TRAF6 and RIGI. Interacts with COPS5. As to expression, expression significantly higher in peripheral blood mononuclear cells (PBMCs) and monocytes from systemic lupus erythematosus (SLE) patients than in those from healthy individuals (at protein level). Spleen, lung, leukocytes, lymph nodes, placenta, bone marrow and fetal liver.

Its subcellular location is the cytoplasm. It is found in the mitochondrion. In terms of biological role, IFN-induced antiviral protein which acts as an inhibitor of cellular as well as viral processes, cell migration, proliferation, signaling, and viral replication. Enhances MAVS-mediated host antiviral responses by serving as an adapter bridging TBK1 to MAVS which leads to the activation of TBK1 and phosphorylation of IRF3 and phosphorylated IRF3 translocates into nucleus to promote antiviral gene transcription. Exhibits an antiproliferative activity via the up-regulation of cell cycle negative regulators CDKN1A/p21 and CDKN1B/p27. Normally, CDKN1B/p27 turnover is regulated by COPS5, which binds CDKN1B/p27 in the nucleus and exports it to the cytoplasm for ubiquitin-dependent degradation. IFIT3 sequesters COPS5 in the cytoplasm, thereby increasing nuclear CDKN1B/p27 protein levels. Up-regulates CDKN1A/p21 by down-regulating MYC, a repressor of CDKN1A/p21. Can negatively regulate the apoptotic effects of IFIT2. This is Interferon-induced protein with tetratricopeptide repeats 3 (IFIT3) from Homo sapiens (Human).